Consider the following 248-residue polypeptide: MNHIVLGLIQGLTEFLPISSSGHLTLFSYLFNIEPNISNFAFLHLATLAAIIVFVWKEIVEILKGLFTLKKEYYSLVLKIIISTIPAAIFGFLFNSTIENSFSNLKIISFFFLVTAASLFVSDKLKGKKDFFNISYIDALIIGLFQMIAIFPGISRSGITLFGALTVGLEREKALKYSFLMGIPVILGAGILETSKIELNSYILISGLVAFLSGLLSLLILKKLTISKKLKIFSYYCILIAIIAFFVG.

8 helical membrane passes run 4–24 (IVLG…SGHL), 40–60 (FAFL…KEIV), 74–94 (YSLV…GFLF), 101–121 (SFSN…SLFV), 134–154 (ISYI…FPGI), 174–194 (ALKY…ILET), 201–221 (SYIL…LLIL), and 228–248 (KKLK…FFVG).

This sequence belongs to the UppP family.

The protein resides in the cell inner membrane. It carries out the reaction di-trans,octa-cis-undecaprenyl diphosphate + H2O = di-trans,octa-cis-undecaprenyl phosphate + phosphate + H(+). In terms of biological role, catalyzes the dephosphorylation of undecaprenyl diphosphate (UPP). Confers resistance to bacitracin. The sequence is that of Undecaprenyl-diphosphatase from Thermosipho africanus (strain TCF52B).